The sequence spans 85 residues: Large ribosomal subunit protein bL27 (85 aa).

This sequence belongs to the bacterial ribosomal protein bL27 family.

The sequence is that of Large ribosomal subunit protein bL27 from Leptospira biflexa serovar Patoc (strain Patoc 1 / Ames).